The following is a 546-amino-acid chain: T-complex protein 1 subunit epsilon (546 aa).

Belongs to the TCP-1 chaperonin family. In terms of assembly, heterooligomeric complex of about 850 to 900 kDa that forms two stacked rings, 12 to 16 nm in diameter.

It is found in the cytoplasm. Functionally, molecular chaperone; assists the folding of proteins upon ATP hydrolysis. Known to play a role, in vitro, in the folding of actin and tubulin. The chain is T-complex protein 1 subunit epsilon (cct5) from Schizosaccharomyces pombe (strain 972 / ATCC 24843) (Fission yeast).